The following is a 354-amino-acid chain: Ferrochelatase (354 aa).

Positions 214 and 295 each coordinate Fe cation.

Belongs to the ferrochelatase family.

The protein resides in the cytoplasm. It carries out the reaction heme b + 2 H(+) = protoporphyrin IX + Fe(2+). Its pathway is porphyrin-containing compound metabolism; protoheme biosynthesis; protoheme from protoporphyrin-IX: step 1/1. Catalyzes the ferrous insertion into protoporphyrin IX. This Burkholderia cenocepacia (strain HI2424) protein is Ferrochelatase.